The chain runs to 319 residues: Proline hydroxylase buaE (319 aa).

In terms of domain architecture, Fe2OG dioxygenase spans 168–280; it reads NSSELRLNHY…RYSIAYFGKP (113 aa). Residues H195, D197, and H255 each contribute to the Fe cation site. R271 contacts 2-oxoglutarate.

Belongs to the iron/ascorbate-dependent oxidoreductase family. Fe(2+) is required as a cofactor.

It participates in mycotoxin biosynthesis. Its function is as follows. Proline hydroxylase; part of the gene cluster that mediates the biosynthesis of burnettramic acids, an unusual class of bolaamphiphilic pyrrolizidinediones that display potent antibacterial, antifungal, and cytotoxic activities. The first step of the biosynthesis of burnettramic acids is the hydroxylation of proline by the proline hydroxylase buaE to generate 4-hydroxyproline. The PKS-NRPS buaA and trans-enoyl reductase buaC construct the highly reduced polyketide chain, and the condensation (C) domain of buaA then catalyzes the amide bond formation with the activated 4-hydroxyproline. This is followed by the R domain releasing the nascent polyketide-peptide directly via a Dieckmann condensation to afford a tetramic acid fused to the hydroxyproline, generating the bicyclic pyrrolidinedione moiety. The cytochrome P450 monooxygenases buaD and buaG are likely responsible for the multiple hydroxylations on the polyketide chain and its terminus, although in the heterologous context, buaD does not appear to be required. Therefore, while buaG may be a multifunctional cytochrome P450 monooxygenase, it cannot be ruled out that the two secondary alcohols on the polyketide chain could have an acetate origin. Finally, the glycosyltransferase buaB transfers beta-D-mannose to the aglycone burnettramic acid A to form burnettramic acid A. Burnettramic acid B is a minor cis-pyrrolizidine epimer of burnettramic acid A and it is likely that small amounts of it form naturally in acidic environments. In Petromyces alliaceus (Aspergillus alliaceus), this protein is Proline hydroxylase buaE.